A 62-amino-acid chain; its full sequence is DNA-directed RNA polymerase subunit Rpo10 (62 aa).

Positions 6, 9, 43, and 44 each coordinate Zn(2+).

The protein belongs to the archaeal Rpo10/eukaryotic RPB10 RNA polymerase subunit family. Part of the RNA polymerase complex. Zn(2+) is required as a cofactor.

Its subcellular location is the cytoplasm. The catalysed reaction is RNA(n) + a ribonucleoside 5'-triphosphate = RNA(n+1) + diphosphate. DNA-dependent RNA polymerase (RNAP) catalyzes the transcription of DNA into RNA using the four ribonucleoside triphosphates as substrates. The polypeptide is DNA-directed RNA polymerase subunit Rpo10 (Methanoregula boonei (strain DSM 21154 / JCM 14090 / 6A8)).